A 125-amino-acid chain; its full sequence is MNGLALAYLGDAYYELEIRKYLITQGIRNVGKLHTEKVRLASNEAQASIMNYFLSLEILSEEEIDAYKKGRNKSHNSRKQMDMVTYQQATGFESLIGYLSIIDEQRAKDLINLGITFIKQGGYNG.

Asp-11 is an active-site residue.

This sequence belongs to the MrnC RNase family. Homodimer. Mg(2+) serves as cofactor.

It is found in the cytoplasm. Functionally, involved in correct processing of both the 5' and 3' ends of 23S rRNA precursor. Processes 30S rRNA precursor transcript even in absence of ribonuclease 3 (Rnc); Rnc processes 30S rRNA into smaller rRNA precursors. In Acholeplasma laidlawii (strain PG-8A), this protein is Mini-ribonuclease 3.